The chain runs to 165 residues: ATP synthase subunit b (165 aa).

A helical membrane pass occupies residues Ser7–Ile27.

The protein belongs to the ATPase B chain family. As to quaternary structure, F-type ATPases have 2 components, F(1) - the catalytic core - and F(0) - the membrane proton channel. F(1) has five subunits: alpha(3), beta(3), gamma(1), delta(1), epsilon(1). F(0) has three main subunits: a(1), b(2) and c(10-14). The alpha and beta chains form an alternating ring which encloses part of the gamma chain. F(1) is attached to F(0) by a central stalk formed by the gamma and epsilon chains, while a peripheral stalk is formed by the delta and b chains.

The protein localises to the cell membrane. Functionally, f(1)F(0) ATP synthase produces ATP from ADP in the presence of a proton or sodium gradient. F-type ATPases consist of two structural domains, F(1) containing the extramembraneous catalytic core and F(0) containing the membrane proton channel, linked together by a central stalk and a peripheral stalk. During catalysis, ATP synthesis in the catalytic domain of F(1) is coupled via a rotary mechanism of the central stalk subunits to proton translocation. In terms of biological role, component of the F(0) channel, it forms part of the peripheral stalk, linking F(1) to F(0). This chain is ATP synthase subunit b, found in Streptococcus agalactiae serotype Ia (strain ATCC 27591 / A909 / CDC SS700).